A 262-amino-acid polypeptide reads, in one-letter code: Abhydrolase domain-containing protein AFT2-1 (262 aa).

The Peroxisomal targeting signal type 1 signature appears at 260-262 (SKL).

The protein belongs to the AB hydrolase superfamily. AKT2 hydrolase family.

The protein localises to the peroxisome. It functions in the pathway mycotoxin biosynthesis. Abhydrolase domain-containing protein; part of the gene clusters that mediate the biosynthesis of the host-selective toxins (HSTs) AF-toxins responsible for Alternaria black spot of strawberry disease by the strawberry pathotype. AF-toxin I and III are valine derivatives of 2,3-dyhydroxy-isovaleric acid and 2-hydroxy-isovaleric acid respectively, while AF II is an isoleucine derivative of 2-hydroxy-valeric acid. These derivatives are bound to a 9,10-epoxy-8-hydroxy-9-methyl-decatrienoic acid (EDA) moiety. On cellular level, AF-toxins affect plasma membrane of susceptible cells and cause a sudden increase in loss of K(+) after a few minutes of toxin treatment. The aldo-keto reductase AFTS1 catalyzes the conversion of 2-keto-isovaleric acid (2-KIV) to 2-hydroxy-isovaleric acid (2-HIV) by reduction of its ketone to an alcohol. The acyl-CoA ligase AFT1, the hydrolase AFT2 and the enoyl-CoA hydratases AFT3 and AFT6, but also the polyketide synthase AFT9, the acyl-CoA dehydrogenase AFT10, the cytochrome P450 monooxygenase AFT11 and the oxidoreductase AFT12 are all involved in the biosynthesis of the AK-, AF- and ACT-toxin common EDA structural moiety. The exact function of each enzyme, and of additional enzymes identified within the AF-toxin clusters have still to be determined. This is Abhydrolase domain-containing protein AFT2-1 from Alternaria alternata (Alternaria rot fungus).